An 850-amino-acid chain; its full sequence is Mitogen-activated protein kinase kinase kinase 11 (850 aa).

Ser-11 is subject to Phosphoserine. Residues 16-35 (WNGSGSGGGGGTGGVRPEGS) form a disordered region. The segment covering 17 to 31 (NGSGSGGGGGTGGVR) has biased composition (gly residues). Ser-35 is subject to Phosphoserine. Residues 42–106 (YANPVWTALF…PSNYVSRGGG (65 aa)) form the SH3 domain. The 263-residue stretch at 118–380 (LRLEEVIGIG…ASILQQLEAL (263 aa)) folds into the Protein kinase domain. Residues 124–132 (IGIGGFGKV) and Lys-145 each bind ATP. The Proton acceptor role is filled by Asp-242. Thr-278 is modified (phosphothreonine; by autocatalysis). Phosphoserine; by autocatalysis and MAP4K1 is present on Ser-282. A Phosphoserine modification is found at Ser-395. 2 leucine-zipper regions span residues 404 to 425 (IQGL…EEEL) and 439 to 460 (LRRR…ELTL). Phosphoserine occurs at positions 508 and 525. Residues 535–644 (QLEPTESGQT…SSGTPKLIQR (110 aa)) form a disordered region. The span at 538–547 (PTESGQTWGR) shows a compositional bias: polar residues. 3 positions are modified to phosphoserine: Ser-549, Ser-556, and Ser-557. A compositionally biased stretch (basic and acidic residues) spans 551–563 (RRLEDSSNGERRA). Over residues 598-610 (SSPLGSPSTPPAL) the composition is skewed to low complexity. Phosphoserine is present on Ser-655. The segment at 657–850 (GLGRDLQPPG…QAPWAPEAGP (194 aa)) is disordered. Over residues 677–693 (TAPPPAQMPSPCPPELP) the composition is skewed to pro residues. Residues 700-711 (LSQTTPDAHSSP) are compositionally biased toward polar residues. Ser-709 is modified (phosphoserine). Thr-712 is modified (phosphothreonine). Phosphoserine occurs at positions 728, 731, 743, 751, 761, 773, 792, 796, and 818. Over residues 763-776 (PLGLISRPRPSPLR) the composition is skewed to low complexity. A compositionally biased stretch (pro residues) spans 790–802 (RPSPLPSPQPAPR). Positions 803–819 (RAPWTLFPDSDPFWDSP) are enriched in low complexity.

The protein belongs to the protein kinase superfamily. STE Ser/Thr protein kinase family. MAP kinase kinase kinase subfamily. Homodimer; undergoes dimerization during activation. Interacts with MAP2K4/MKK4 and MAP2K7/MKK7. Found in a complex with SH3RF1, RAC1, MAP2K7/MKK7, MAPK8IP1/JIP1 and MAPK8/JNK1. Requires Mg(2+) as cofactor. Post-translationally, autophosphorylation on serine and threonine residues within the activation loop plays a role in enzyme activation. Thr-278 is likely to be the main autophosphorylation site. Phosphorylation of Ser-556 and Ser-557 is induced by CDC42.

It is found in the cytoplasm. The protein resides in the cytoskeleton. It localises to the microtubule organizing center. Its subcellular location is the centrosome. It catalyses the reaction L-seryl-[protein] + ATP = O-phospho-L-seryl-[protein] + ADP + H(+). The enzyme catalyses L-threonyl-[protein] + ATP = O-phospho-L-threonyl-[protein] + ADP + H(+). Its activity is regulated as follows. Homodimerization via the leucine zipper domains is required for autophosphorylation and subsequent activation. Activates the JUN N-terminal pathway. Required for serum-stimulated cell proliferation and for mitogen and cytokine activation of MAPK14 (p38), MAPK3 (ERK) and MAPK8 (JNK1) through phosphorylation and activation of MAP2K4/MKK4 and MAP2K7/MKK7. Plays a role in mitogen-stimulated phosphorylation and activation of BRAF, but does not phosphorylate BRAF directly. Influences microtubule organization during the cell cycle. The sequence is that of Mitogen-activated protein kinase kinase kinase 11 (Map3k11) from Mus musculus (Mouse).